Here is a 371-residue protein sequence, read N- to C-terminus: Cyanide hydratase (371 aa).

One can recognise a CN hydrolase domain in the interval 8–286 (YKAAAVQAEP…EGLMFVEIDL (279 aa)). The active-site Proton acceptor is Glu-48. Lys-130 is a catalytic residue. The Nucleophile role is filled by Cys-165. The tract at residues 326–356 (DGGIGTYNTQDRVGLNRPLDAPKVDGPSGVS) is disordered.

Belongs to the carbon-nitrogen hydrolase superfamily. Nitrilase family. Oligomer of dimers, forming left-handed helical fibers.

The catalysed reaction is formamide = hydrogen cyanide + H2O. Its function is as follows. Catalyzes the hydration of cyanide to formamide. Degradation of cyanide may be important for plant pathogenic fungi in infection of cyanogenic plants. Can also transform some nitriles like 2-cyanopyridine and fumaronitrile and has a minor activity with 4-cyanophenyl acetonitrile (4-CPA). This is Cyanide hydratase from Botryotinia fuckeliana (strain T4) (Noble rot fungus).